The primary structure comprises 321 residues: Secreted RxLR effector protein 71 (321 aa).

The N-terminal stretch at 1–23 is a signal peptide; it reads MRPTGWRWPVLSLLLVLLPFQAA. A RxLR motif is present at residues 84 to 87; the sequence is RSLR. Residue Asn-114 is glycosylated (N-linked (GlcNAc...) asparagine). The tract at residues 210-237 is disordered; it reads VSLGRDGNGPVRGISSSPTRLTRPRMGG.

It belongs to the RxLR effector family.

It is found in the secreted. The protein resides in the host cell. In terms of biological role, secreted effector that partially suppresses the host cell death induced by cell death-inducing proteins. The polypeptide is Secreted RxLR effector protein 71 (Plasmopara viticola (Downy mildew of grapevine)).